We begin with the raw amino-acid sequence, 185 residues long: Elongation factor P (185 aa).

The protein belongs to the elongation factor P family.

Its subcellular location is the cytoplasm. It participates in protein biosynthesis; polypeptide chain elongation. Involved in peptide bond synthesis. Stimulates efficient translation and peptide-bond synthesis on native or reconstituted 70S ribosomes in vitro. Probably functions indirectly by altering the affinity of the ribosome for aminoacyl-tRNA, thus increasing their reactivity as acceptors for peptidyl transferase. In Streptococcus equi subsp. zooepidemicus (strain MGCS10565), this protein is Elongation factor P.